A 255-amino-acid chain; its full sequence is Tryptophan synthase alpha chain (255 aa).

Residues Glu44 and Asp55 each act as proton acceptor in the active site.

It belongs to the TrpA family. In terms of assembly, tetramer of two alpha and two beta chains.

The enzyme catalyses (1S,2R)-1-C-(indol-3-yl)glycerol 3-phosphate + L-serine = D-glyceraldehyde 3-phosphate + L-tryptophan + H2O. Its pathway is amino-acid biosynthesis; L-tryptophan biosynthesis; L-tryptophan from chorismate: step 5/5. Functionally, the alpha subunit is responsible for the aldol cleavage of indoleglycerol phosphate to indole and glyceraldehyde 3-phosphate. The sequence is that of Tryptophan synthase alpha chain from Dehalococcoides mccartyi (strain ATCC BAA-2100 / JCM 16839 / KCTC 5957 / BAV1).